The sequence spans 424 residues: Probable methyltransferase EP424R (424 aa).

The Adrift-type SAM-dependent 2'-O-MTase domain maps to 103–315; the sequence is QIVTNAWLKM…TYIVGKNRLR (213 aa). Positions 135 and 228 each coordinate S-adenosyl-L-methionine. The active-site Proton acceptor is Lys268.

It is found in the virion. This Ornithodoros (relapsing fever ticks) protein is Probable methyltransferase EP424R.